A 420-amino-acid polypeptide reads, in one-letter code: L-rhamnose isomerase (420 aa).

The Mn(2+) site is built by H264, D296, and D298.

It belongs to the rhamnose isomerase family. It depends on Mn(2+) as a cofactor.

The protein resides in the cytoplasm. It carries out the reaction L-rhamnopyranose = L-rhamnulose. Its pathway is carbohydrate degradation; L-rhamnose degradation; glycerone phosphate from L-rhamnose: step 1/3. Catalyzes the interconversion of L-rhamnose and L-rhamnulose. This chain is L-rhamnose isomerase, found in Listeria innocua serovar 6a (strain ATCC BAA-680 / CLIP 11262).